The sequence spans 428 residues: Glutamate-1-semialdehyde 2,1-aminomutase (428 aa).

Residue K267 is modified to N6-(pyridoxal phosphate)lysine.

It belongs to the class-III pyridoxal-phosphate-dependent aminotransferase family. HemL subfamily. As to quaternary structure, homodimer. Pyridoxal 5'-phosphate serves as cofactor.

The protein localises to the cytoplasm. The catalysed reaction is (S)-4-amino-5-oxopentanoate = 5-aminolevulinate. It functions in the pathway porphyrin-containing compound metabolism; protoporphyrin-IX biosynthesis; 5-aminolevulinate from L-glutamyl-tRNA(Glu): step 2/2. This Flavobacterium johnsoniae (strain ATCC 17061 / DSM 2064 / JCM 8514 / BCRC 14874 / CCUG 350202 / NBRC 14942 / NCIMB 11054 / UW101) (Cytophaga johnsonae) protein is Glutamate-1-semialdehyde 2,1-aminomutase.